A 314-amino-acid polypeptide reads, in one-letter code: Vacuolar membrane protein FOSTERSB_4073 (314 aa).

A disordered region spans residues 32–60; it reads KPTSSVVSETSSKSLPSLTSSAFSTSSGA. Residues 93-113 traverse the membrane as a helical segment; sequence VYIAVGAVIGAIFISILIWWL. Residues Ser148, Ser254, and Ser274 each carry the phosphoserine modification. Residues 240 to 309 are disordered; the sequence is EERKLNLNRP…PSMFLDDVLN (70 aa). The span at 254 to 269 shows a compositional bias: basic and acidic residues; it reads SPERKEKKINSMEGYH.

It belongs to the PRM5 family.

The protein resides in the vacuole membrane. This Saccharomyces cerevisiae (strain FostersB) (Baker's yeast) protein is Vacuolar membrane protein FOSTERSB_4073.